Consider the following 262-residue polypeptide: Thiazole synthase (262 aa).

Lysine 105 functions as the Schiff-base intermediate with DXP in the catalytic mechanism. 1-deoxy-D-xylulose 5-phosphate contacts are provided by residues glycine 166, 192-193 (AG), and 214-215 (NT).

This sequence belongs to the ThiG family. As to quaternary structure, homotetramer. Forms heterodimers with either ThiH or ThiS.

Its subcellular location is the cytoplasm. It carries out the reaction [ThiS sulfur-carrier protein]-C-terminal-Gly-aminoethanethioate + 2-iminoacetate + 1-deoxy-D-xylulose 5-phosphate = [ThiS sulfur-carrier protein]-C-terminal Gly-Gly + 2-[(2R,5Z)-2-carboxy-4-methylthiazol-5(2H)-ylidene]ethyl phosphate + 2 H2O + H(+). The protein operates within cofactor biosynthesis; thiamine diphosphate biosynthesis. Functionally, catalyzes the rearrangement of 1-deoxy-D-xylulose 5-phosphate (DXP) to produce the thiazole phosphate moiety of thiamine. Sulfur is provided by the thiocarboxylate moiety of the carrier protein ThiS. In vitro, sulfur can be provided by H(2)S. The chain is Thiazole synthase from Phenylobacterium zucineum (strain HLK1).